Consider the following 1201-residue polypeptide: Kinesin-like protein costa (1201 aa).

The Kinesin motor domain maps to 4–391 (PIQVAVRIFP…LQFAFKVQCV (388 aa)). A disordered region spans residues 23 to 92 (SFGPTEPKKD…NGNDSGQKDY (70 aa)). Over residues 28–56 (EPKKDAQAVDEGADSKDSEAQVPAAEKDN) the composition is skewed to basic and acidic residues. Positions 57–75 (PSISETDPNGNAEQDSAAD) are enriched in polar residues. An ATP-binding site is contributed by 175–182 (GQRGQGKS). 3 disordered regions span residues 502–536 (AEEPEDVNSEAANSESPNSDNENDTDNESHRPDLD), 565–606 (HPKA…GASL), and 618–639 (ASQQPPPPIDPESVVDPLESSS). The span at 510-521 (SEAANSESPNSD) shows a compositional bias: low complexity. Phosphoserine is present on residues Ser-599 and Ser-605. Coiled coils occupy residues 652 to 821 (AATA…ELVK) and 968 to 1001 (TKVIDLRDSSRKLELQLVQLERERDAWEWKERVL).

Belongs to the TRAFAC class myosin-kinesin ATPase superfamily. Kinesin family. KIF27 subfamily. In terms of assembly, homodimer (Potential). Binds microtubules. Interacts with ci, smo, sgg, CkIalpha and protein kinase A catalytic subunit. Interacts (via kinesin motor domain) with Ubr3. Polyubiquitinated by Ubr3, which leads to proteasomal degradation.

Its subcellular location is the cytoplasm. The protein resides in the cytoskeleton. Its function is as follows. Regulates cubitus interruptus (ci) processing by recruiting multiple kinases to promote its efficient phosphorylation. Scaffolds multiple kinases and ci into proximity to promote its hyperphosphorylation, which then targets it for SCFSlimb/proteasome-mediated processing to generate its repressor form. Hh signaling inhibits ci phosphorylation by interfering with the cos-ci-kinases complex formation. Negatively regulates hh-signaling pathways during various processes, including photoreceptor differentiation. May negatively regulate a hh-signaling pathway which functions in the intestinal immune response to bacterial uracil by activating the Duox-dependent production of reactive oxygen species (ROS). This chain is Kinesin-like protein costa (cos), found in Drosophila melanogaster (Fruit fly).